Reading from the N-terminus, the 178-residue chain is ATP synthase subunit delta (178 aa).

Belongs to the ATPase delta chain family. F-type ATPases have 2 components, F(1) - the catalytic core - and F(0) - the membrane proton channel. F(1) has five subunits: alpha(3), beta(3), gamma(1), delta(1), epsilon(1). F(0) has three main subunits: a(1), b(2) and c(10-14). The alpha and beta chains form an alternating ring which encloses part of the gamma chain. F(1) is attached to F(0) by a central stalk formed by the gamma and epsilon chains, while a peripheral stalk is formed by the delta and b chains.

It is found in the cell membrane. F(1)F(0) ATP synthase produces ATP from ADP in the presence of a proton or sodium gradient. F-type ATPases consist of two structural domains, F(1) containing the extramembraneous catalytic core and F(0) containing the membrane proton channel, linked together by a central stalk and a peripheral stalk. During catalysis, ATP synthesis in the catalytic domain of F(1) is coupled via a rotary mechanism of the central stalk subunits to proton translocation. Its function is as follows. This protein is part of the stalk that links CF(0) to CF(1). It either transmits conformational changes from CF(0) to CF(1) or is implicated in proton conduction. The protein is ATP synthase subunit delta of Streptococcus sanguinis (strain SK36).